The sequence spans 514 residues: 2,3-bisphosphoglycerate-independent phosphoglycerate mutase (514 aa).

Positions 14 and 64 each coordinate Mn(2+). The active-site Phosphoserine intermediate is Ser64. Substrate-binding positions include His125, 155–156, Arg187, Arg193, 263–266, and Lys336; these read RD and RADR. Residues Asp403, His407, Asp444, His445, and His463 each coordinate Mn(2+).

This sequence belongs to the BPG-independent phosphoglycerate mutase family. Monomer. Mn(2+) serves as cofactor.

It catalyses the reaction (2R)-2-phosphoglycerate = (2R)-3-phosphoglycerate. It functions in the pathway carbohydrate degradation; glycolysis; pyruvate from D-glyceraldehyde 3-phosphate: step 3/5. Functionally, catalyzes the interconversion of 2-phosphoglycerate and 3-phosphoglycerate. In Shewanella putrefaciens (strain CN-32 / ATCC BAA-453), this protein is 2,3-bisphosphoglycerate-independent phosphoglycerate mutase.